Reading from the N-terminus, the 413-residue chain is Gamma-glutamyl phosphate reductase (413 aa).

The protein belongs to the gamma-glutamyl phosphate reductase family.

Its subcellular location is the cytoplasm. The enzyme catalyses L-glutamate 5-semialdehyde + phosphate + NADP(+) = L-glutamyl 5-phosphate + NADPH + H(+). The protein operates within amino-acid biosynthesis; L-proline biosynthesis; L-glutamate 5-semialdehyde from L-glutamate: step 2/2. Functionally, catalyzes the NADPH-dependent reduction of L-glutamate 5-phosphate into L-glutamate 5-semialdehyde and phosphate. The product spontaneously undergoes cyclization to form 1-pyrroline-5-carboxylate. This Alkaliphilus oremlandii (strain OhILAs) (Clostridium oremlandii (strain OhILAs)) protein is Gamma-glutamyl phosphate reductase.